The following is a 448-amino-acid chain: Proton extrusion protein PxcA (448 aa).

4 helical membrane passes run 231-251 (ILLLIIIPLLIHQLTKTFFLI), 323-343 (IDSIANIFADLFSFIAFVLVL), 372-392 (LIILFTDMFVGFHSPHGWEVI), and 408-428 (FNFLFIATFPVILDTVLKYWI).

It belongs to the CemA family.

The protein resides in the cell inner membrane. In terms of biological role, required for H(+) efflux immediately after light irradiation to form a rapid H(+) concentration gradient across the thylakoid membranes. Together with PxcL, contributes to transient H(+) uptake following dark to light transition. In Rippkaea orientalis (strain PCC 8801 / RF-1) (Cyanothece sp. (strain PCC 8801)), this protein is Proton extrusion protein PxcA.